Here is a 634-residue protein sequence, read N- to C-terminus: MTNSNLRTENHFDYVKISIASPQRIMDWGQRTLPNGQVVGEVTKPETINYRTLKPEMDGLFCEKIFGPSKDWECHCGKYKRVRHRGIVCERCGVEVTESRVRRHRMGYIKLAAPVSHVWYLKGIPSYVAILLDIPLRDVEQIVYFNCYVVLDPGDHKELKYKQLLTEDEWLEIEDEIYAEDSTIENEPFVGIGAEALKQLLEDLDLNQIAEELREEITQSKGQKRAKLIKRIRVIDNFIATNAKPEWMVLDAIPVIPPDLRPMVQLDGGRFATSDLNDLYRRVINRNNRLARLQEILAPEIIVRNEKRMLQEAVDALIDNGRRGRTVVGANNRALKSLSDIIEGKQGRFRQNLLGKRVDYSGRSVIVVGPKLKMHQCGLPKEMAIELFQPFVIHRLIRQNIVNNIKAAKKLIQKADDEVMQVLQEVIEGHPILLNRAPTLHRLGIQAFEPKLVGGRAIQLHPLVCPAFNADFDGDQMAVHVPLALESQTEARMLMLASNNILSPATGEPIVTPSQDMVLGSYYLTALQPNYQKPDFGDNKSTFASLEDVIFAFEDKRLSLHEWVWVRFNGEVEDEDEMSKPQKIEELEDGSRLEMWKLRRDRFDSQNNLISRFVLTTVGRVVMNYTIIDSVSKT.

Cys-74, Cys-76, Cys-89, and Cys-92 together coordinate Zn(2+). Mg(2+) is bound by residues Asp-471, Asp-473, and Asp-475.

This sequence belongs to the RNA polymerase beta' chain family. RpoC1 subfamily. In terms of assembly, in cyanobacteria the RNAP catalytic core is composed of 2 alpha, 1 beta, 1 beta', 1 gamma and 1 omega subunit. When a sigma factor is associated with the core the holoenzyme is formed, which can initiate transcription. The cofactor is Mg(2+). Requires Zn(2+) as cofactor.

The catalysed reaction is RNA(n) + a ribonucleoside 5'-triphosphate = RNA(n+1) + diphosphate. DNA-dependent RNA polymerase catalyzes the transcription of DNA into RNA using the four ribonucleoside triphosphates as substrates. This is DNA-directed RNA polymerase subunit gamma from Prochlorococcus marinus (strain MIT 9312).